A 571-amino-acid polypeptide reads, in one-letter code: Urease subunit alpha (571 aa).

The Urease domain maps to 129–571; the sequence is GGIDSHIHFI…LPMAQRYFLF (443 aa). The Ni(2+) site is built by His134, His136, and Lys217. At Lys217 the chain carries N6-carboxylysine. His219 lines the substrate pocket. Ni(2+) is bound by residues His246 and His272. His320 (proton donor) is an active-site residue. Position 360 (Asp360) interacts with Ni(2+).

It belongs to the metallo-dependent hydrolases superfamily. Urease alpha subunit family. In terms of assembly, heterotrimer of UreA (gamma), UreB (beta) and UreC (alpha) subunits. Three heterotrimers associate to form the active enzyme. Ni cation is required as a cofactor. Carboxylation allows a single lysine to coordinate two nickel ions.

It is found in the cytoplasm. The enzyme catalyses urea + 2 H2O + H(+) = hydrogencarbonate + 2 NH4(+). Its pathway is nitrogen metabolism; urea degradation; CO(2) and NH(3) from urea (urease route): step 1/1. In Cupriavidus necator (strain ATCC 17699 / DSM 428 / KCTC 22496 / NCIMB 10442 / H16 / Stanier 337) (Ralstonia eutropha), this protein is Urease subunit alpha.